Here is a 209-residue protein sequence, read N- to C-terminus: Claudin-like protein ZF-A9 (209 aa).

4 helical membrane-spanning segments follow: residues 8–28 (LGTTLGTLGWLGIIISCAIPL), 81–101 (AILVISAIVGLIAMFASFAGG), 114–134 (ALVATTGGVAFIIAGILGLVP), and 159–179 (FGAAIFICWGAAVLLVIGGGL). The segment at 187-209 (GRTSSRGRYTPASQNGRERSEYV) is disordered. Over residues 188-201 (RTSSRGRYTPASQN) the composition is skewed to polar residues.

It belongs to the claudin family.

It localises to the cell membrane. The protein resides in the cell junction. Its subcellular location is the tight junction. Functionally, component of tight junction (TJ) strands. This is Claudin-like protein ZF-A9 (cldng) from Danio rerio (Zebrafish).